A 227-amino-acid polypeptide reads, in one-letter code: MASPSRQPPPGGSGLLHGSRARSYGSLVQSACSPVRERRLEHQLEPGDTLAGLALKYGVTMEQIKRANRLYTNDSIFLKKTLYIPILTEPRDLFNGLDSEEEKDGEEEVRPSNDEVWPHSTERKKQETGAGRANGEVFPTPGQETPTPIHDLSASDFLKKLDSQISLSKKAAAQKLKKGESGVPGEDAGLHLSSPRMQQRAVLGPVPLTRTSRTRTLRDQEDEIFKL.

Residues 1 to 11 (MASPSRQPPPG) are compositionally biased toward pro residues. A disordered region spans residues 1-20 (MASPSRQPPPGGSGLLHGSR). 2 positions are modified to phosphoserine: Ser23 and Ser33. In terms of domain architecture, LysM spans 40 to 84 (LEHQLEPGDTLAGLALKYGVTMEQIKRANRLYTNDSIFLKKTLYI). The disordered stretch occupies residues 95 to 150 (NGLDSEEEKDGEEEVRPSNDEVWPHSTERKKQETGAGRANGEVFPTPGQETPTPIH). Positions 98–107 (DSEEEKDGEE) are enriched in acidic residues. Phosphoserine is present on Ser99. Positions 108–127 (EVRPSNDEVWPHSTERKKQE) are enriched in basic and acidic residues. A phosphoserine mark is found at Ser166, Ser181, Ser194, and Ser212. The disordered stretch occupies residues 172–196 (AAQKLKKGESGVPGEDAGLHLSSPR).

This is LysM and putative peptidoglycan-binding domain-containing protein 1 (LYSMD1) from Macaca fascicularis (Crab-eating macaque).